A 358-amino-acid polypeptide reads, in one-letter code: 3-dehydroquinate synthase (358 aa).

Residues 75 to 80 (SGEGSK), 109 to 113 (GVLGD), 133 to 134 (TT), Lys-146, and Lys-155 contribute to the NAD(+) site. Glu-188, His-245, and His-262 together coordinate Zn(2+).

It belongs to the sugar phosphate cyclases superfamily. Dehydroquinate synthase family. Requires Co(2+) as cofactor. Zn(2+) is required as a cofactor. NAD(+) serves as cofactor.

Its subcellular location is the cytoplasm. It carries out the reaction 7-phospho-2-dehydro-3-deoxy-D-arabino-heptonate = 3-dehydroquinate + phosphate. The protein operates within metabolic intermediate biosynthesis; chorismate biosynthesis; chorismate from D-erythrose 4-phosphate and phosphoenolpyruvate: step 2/7. Catalyzes the conversion of 3-deoxy-D-arabino-heptulosonate 7-phosphate (DAHP) to dehydroquinate (DHQ). The chain is 3-dehydroquinate synthase from Methylacidiphilum infernorum (isolate V4) (Methylokorus infernorum (strain V4)).